Consider the following 303-residue polypeptide: MFYGFDIGGTKIALGVFDSTRRLQWEKRVPTPHTSYSAFLDAVCELVAEADLRFGVKGAVGIGIPGMPETEDGTLYAANVPAASGKPLRADLSARLERDVRLDNDANCFALSEAWDDEFTQYPLVMGLILGTGVGGGLVLNGKPITGQSYITGEFGHMRLPVDALTLMGFDFPLRRCGCGQMGCIENYLSGRGFAWLYQHYYHQSLQAPEIIALWEQGDKQAHAHVERYLDLLAVCLGNILTIVDPCLLVIGGGLSNFTAITTQLSERLPRHLLPVARVPRIERARHGDAGGMRGAAFLHLTD.

ATP-binding positions include glycine 4–lysine 11 and glycine 133–leucine 140. Residues histidine 157, cysteine 177, cysteine 179, and cysteine 184 each contribute to the Zn(2+) site.

Belongs to the ROK (NagC/XylR) family. NagK subfamily.

The catalysed reaction is N-acetyl-D-glucosamine + ATP = N-acetyl-D-glucosamine 6-phosphate + ADP + H(+). Its pathway is cell wall biogenesis; peptidoglycan recycling. Functionally, catalyzes the phosphorylation of N-acetyl-D-glucosamine (GlcNAc) derived from cell-wall degradation, yielding GlcNAc-6-P. This is N-acetyl-D-glucosamine kinase from Salmonella arizonae (strain ATCC BAA-731 / CDC346-86 / RSK2980).